A 239-amino-acid chain; its full sequence is tRNA (guanine-N(7)-)-methyltransferase (239 aa).

S-adenosyl-L-methionine contacts are provided by Glu-69, Glu-94, Asp-121, and Asp-144. Residue Asp-144 is part of the active site. Residue Lys-148 coordinates substrate. Residues 150–155 (RHNKRR) form an interaction with RNA region. Residues Asp-180 and 217–220 (TKFE) contribute to the substrate site.

Belongs to the class I-like SAM-binding methyltransferase superfamily. TrmB family. In terms of assembly, monomer.

It carries out the reaction guanosine(46) in tRNA + S-adenosyl-L-methionine = N(7)-methylguanosine(46) in tRNA + S-adenosyl-L-homocysteine. Its pathway is tRNA modification; N(7)-methylguanine-tRNA biosynthesis. Its function is as follows. Catalyzes the formation of N(7)-methylguanine at position 46 (m7G46) in tRNA. The chain is tRNA (guanine-N(7)-)-methyltransferase from Escherichia coli O6:K15:H31 (strain 536 / UPEC).